Here is a 303-residue protein sequence, read N- to C-terminus: Ornithine carbamoyltransferase (303 aa).

Residues Ser52–Thr55, Gln79, Arg103, and His130–Gln133 contribute to the carbamoyl phosphate site. L-ornithine contacts are provided by residues Asn161, Asp221, and Ser225–Met226. Residues Cys260–Leu261 and Arg288 each bind carbamoyl phosphate.

This sequence belongs to the aspartate/ornithine carbamoyltransferase superfamily. OTCase family.

Its subcellular location is the cytoplasm. The catalysed reaction is carbamoyl phosphate + L-ornithine = L-citrulline + phosphate + H(+). It functions in the pathway amino-acid biosynthesis; L-arginine biosynthesis; L-arginine from L-ornithine and carbamoyl phosphate: step 1/3. Its function is as follows. Reversibly catalyzes the transfer of the carbamoyl group from carbamoyl phosphate (CP) to the N(epsilon) atom of ornithine (ORN) to produce L-citrulline. This chain is Ornithine carbamoyltransferase (argF), found in Rhizobium meliloti (strain 1021) (Ensifer meliloti).